We begin with the raw amino-acid sequence, 118 residues long: Large ribosomal subunit protein bL20 (118 aa).

This sequence belongs to the bacterial ribosomal protein bL20 family.

In terms of biological role, binds directly to 23S ribosomal RNA and is necessary for the in vitro assembly process of the 50S ribosomal subunit. It is not involved in the protein synthesizing functions of that subunit. The chain is Large ribosomal subunit protein bL20 from Bacillus cytotoxicus (strain DSM 22905 / CIP 110041 / 391-98 / NVH 391-98).